Here is a 391-residue protein sequence, read N- to C-terminus: MNYKTVDVILERALLGDDISPQEGVVLLTQTDSGAIASIRATADKLRQQQAGDTVTYVINRNINFTNICEQHCSFCAFRRDDGDADAYWLDWAGIREKSHDAVQRGATEICMQGGLHPQAQIDGKSLPYYLKLVETIKQEYPQIHLHAFSPQEVQFIARVDGLEYVDVISALQNAGVNSLPGTAAEVLDDEVRRILCPEKINTATWLEIIGTAHKVGLHTTSTILSGHIETPEQKIGHLEKLRSLQQTAINHKYPARITEFIVLPFVGQEAPKSLRRRVGRDQPILADALLLGAVARIYLGNWIPNHQPSWVKLGLAGATEALTWGCNDIGGTLMEEHITTMAGAVGGTCMEVATLQNAIASIGRPYQQRDTLYHKVDAAKKLANTVMSNG.

The region spanning 55 to 302 (VTYVINRNIN…GAVARIYLGN (248 aa)) is the Radical SAM core domain. Residues C69, C73, and C76 each coordinate [4Fe-4S] cluster.

Belongs to the radical SAM superfamily. CofH family. In terms of assembly, consists of two subunits, CofG and CofH. [4Fe-4S] cluster is required as a cofactor.

It carries out the reaction 5-amino-6-(D-ribitylamino)uracil + L-tyrosine + S-adenosyl-L-methionine = 5-amino-5-(4-hydroxybenzyl)-6-(D-ribitylimino)-5,6-dihydrouracil + 2-iminoacetate + 5'-deoxyadenosine + L-methionine + H(+). It functions in the pathway cofactor biosynthesis; coenzyme F0 biosynthesis. In terms of biological role, catalyzes the radical-mediated synthesis of 5-amino-5-(4-hydroxybenzyl)-6-(D-ribitylimino)-5,6-dihydrouracil from 5-amino-6-(D-ribitylamino)uracil and L-tyrosine. The chain is 5-amino-6-(D-ribitylamino)uracil--L-tyrosine 4-hydroxyphenyl transferase from Nostoc sp. (strain PCC 7120 / SAG 25.82 / UTEX 2576).